The chain runs to 467 residues: Regulatory protein NPR6 (467 aa).

The BTB domain maps to 27–111 (SDVTFSVEGR…LYSGQVSIVP (85 aa)). The C2HC NPR-type zinc finger occupies 117 to 131 (RSNCGDRGCWHTHCT). Zn(2+)-binding residues include Cys-120, Cys-125, His-127, and Cys-130. ANK repeat units follow at residues 247-276 (QKIR…LNLD), 277-306 (ESLA…DVNY), 311-340 (TGKT…DPNV), and 344-378 (DGIT…KLRL). A disordered region spans residues 434 to 467 (RDIGDDNSNQREGMNLHHHHHDPSTMYHHHHHHF). Residues 449 to 467 (LHHHHHDPSTMYHHHHHHF) are compositionally biased toward basic residues.

It belongs to the plant 'ANKYRIN-BTB/POZ' family. 'NOOT-BOP-COCH-like' (NBCL) subfamily. Homodimer or heterodimer with BOP2. Interacts with PAN.

It localises to the cytoplasm. The protein resides in the nucleus. It functions in the pathway protein modification; protein ubiquitination. In terms of biological role, may act as a substrate-specific adapter of an E3 ubiquitin-protein ligase complex (CUL3-RBX1-BTB) which mediates the ubiquitination and subsequent proteasomal degradation of target proteins. Acts redundantly with BOP2. BOP1/2 promote leaf and floral meristem fate and determinacy in a pathway targeting AP1 and AGL24. BOP1/2 act as transcriptional co-regulators through direct interaction with TGA factors, including PAN, a direct regulator of AP1. Controls lateral organ fate through positive regulation of adaxial-abaxial polarity genes ATHB-14/PHB, YAB1/FIL and YAB3, and through positive regulation of LOB domain-containing genes LOB, LBD6/AS2 and LBD36. Promotes and maintains a developmentally determinate state in leaf cells through the negative regulation of JAG, JGL and class I KNOX genes. Is also involved in nectary development, formation of normal abscission zones (AZs) and suppression of bract formation, probably by regulating the cell wall disorganization. This is Regulatory protein NPR6 from Arabidopsis thaliana (Mouse-ear cress).